The sequence spans 225 residues: Uracil-DNA glycosylase (225 aa).

D65 acts as the Proton acceptor in catalysis.

It belongs to the uracil-DNA glycosylase (UDG) superfamily. UNG family.

It localises to the cytoplasm. It catalyses the reaction Hydrolyzes single-stranded DNA or mismatched double-stranded DNA and polynucleotides, releasing free uracil.. Functionally, excises uracil residues from the DNA which can arise as a result of misincorporation of dUMP residues by DNA polymerase or due to deamination of cytosine. The protein is Uracil-DNA glycosylase of Clostridium botulinum (strain Alaska E43 / Type E3).